A 274-amino-acid chain; its full sequence is Putative pyruvate, phosphate dikinase regulatory protein (274 aa).

ADP is bound at residue 153–160; sequence GISRTSKT.

This sequence belongs to the pyruvate, phosphate/water dikinase regulatory protein family. PDRP subfamily.

The enzyme catalyses N(tele)-phospho-L-histidyl/L-threonyl-[pyruvate, phosphate dikinase] + ADP = N(tele)-phospho-L-histidyl/O-phospho-L-threonyl-[pyruvate, phosphate dikinase] + AMP + H(+). It catalyses the reaction N(tele)-phospho-L-histidyl/O-phospho-L-threonyl-[pyruvate, phosphate dikinase] + phosphate + H(+) = N(tele)-phospho-L-histidyl/L-threonyl-[pyruvate, phosphate dikinase] + diphosphate. Its function is as follows. Bifunctional serine/threonine kinase and phosphorylase involved in the regulation of the pyruvate, phosphate dikinase (PPDK) by catalyzing its phosphorylation/dephosphorylation. The polypeptide is Putative pyruvate, phosphate dikinase regulatory protein (Bartonella tribocorum (strain CIP 105476 / IBS 506)).